An 857-amino-acid chain; its full sequence is Envelope glycoprotein B (857 aa).

Residues 1–21 (MTRRRVLSVVVLLAALACRLG) form the signal peptide. The Virion surface segment spans residues 22 to 732 (AQTPEQPAPP…SGFISFFKNP (711 aa)). 5 disulfides stabilise this stretch: C51/C528, C68/C484, C141/C206, C295/C342, and C551/C588. N-linked (GlcNAc...) asparagine; by host glycosylation occurs at N76. The segment at 108-114 (IYNGWYA) is involved in fusion and/or binding to host membrane. N-linked (GlcNAc...) asparagine; by host glycosylation is present at N163. The tract at residues 192–200 (GWLIWTYRT) is involved in fusion and/or binding to host membrane. Residues N290, N329, N348, and N395 are each glycosylated (N-linked (GlcNAc...) asparagine; by host). The disordered stretch occupies residues 398-453 (ELTTPTSSPPSSPSPPAPSAARGSTPAAVLRRRRRDAGNATTPVPPTAPGKSLGTL). Residues 404–415 (SSPPSSPSPPAP) are compositionally biased toward pro residues. Residues 416–425 (SAARGSTPAA) show a composition bias toward low complexity. 3 N-linked (GlcNAc...) asparagine; by host glycosylation sites follow: N436, N563, and N629. Residues 561 to 620 (FINDTKTYEGQLGTDNEIFLTKKMTEVCQATSQYYFQSGNEIHVYNDYHHFKTIELDGIA) are oligomerization. Hydrophobic membrane proximal region stretches follow at residues 678–730 (LDNA…SFFK) and 709–729 (NLVS…ISFF). A helical membrane pass occupies residues 733 to 753 (FGGMLILVLVAGVVILVISLT). The Intravirion portion of the chain corresponds to 754-857 (RRTRQMSQQP…ALLGEAETEF (104 aa)). Residues 832-857 (FPGLRRRRYHDPETAAALLGEAETEF) are disordered. The span at 845–857 (TAAALLGEAETEF) shows a compositional bias: low complexity.

It belongs to the herpesviridae glycoprotein B family. As to quaternary structure, homotrimer; disulfide-linked. Binds to heparan sulfate proteoglycans. Interacts with gH/gL heterodimer. A proteolytic cleavage by host furin generates two subunits that remain linked by disulfide bonds.

It localises to the virion membrane. The protein resides in the host cell membrane. Its subcellular location is the host endosome membrane. It is found in the host Golgi apparatus membrane. Its function is as follows. Envelope glycoprotein that forms spikes at the surface of virion envelope. Essential for the initial attachment to heparan sulfate moieties of the host cell surface proteoglycans. Involved in fusion of viral and cellular membranes leading to virus entry into the host cell. Following initial binding to its host receptors, membrane fusion is mediated by the fusion machinery composed at least of gB and the heterodimer gH/gL. May be involved in the fusion between the virion envelope and the outer nuclear membrane during virion egress. The protein is Envelope glycoprotein B of Epstein-Barr virus (strain B95-8) (HHV-4).